The primary structure comprises 276 residues: Rhomboid protease GlpG (276 aa).

Helical transmembrane passes span 94 to 114 (GPVT…MSLI), 142 to 162 (IFMH…WYLG), 169 to 189 (LGSG…GYVQ), 192 to 212 (FSGP…GYVW), 229 to 249 (LIIF…GMSM), and 250 to 270 (ANGA…VDTL). Ser201 acts as the Nucleophile in catalysis. Residue His254 is part of the active site.

This sequence belongs to the peptidase S54 family.

It is found in the cell inner membrane. It catalyses the reaction Cleaves type-1 transmembrane domains using a catalytic dyad composed of serine and histidine that are contributed by different transmembrane domains.. In terms of biological role, rhomboid-type serine protease that catalyzes intramembrane proteolysis. This is Rhomboid protease GlpG from Salmonella typhi.